A 1029-amino-acid polypeptide reads, in one-letter code: DNA repair protein RAD5A (1029 aa).

Positions 83–104 (SVGANHRVEEENESVNGGGEES) are disordered. The Helicase ATP-binding domain occupies 406–622 (PSTLQMARGG…YSLLRFLRIE (217 aa)). ATP is bound at residue 419–426 (DAMGLGKT). Residues 573–576 (DEAH) carry the DEAH box motif. The segment at 794–834 (CPICLEALEDAVLTPCAHRLCRECLLASWRNSTSGLCPVCR) adopts an RING-type zinc-finger fold. The region spanning 864 to 1029 (KITALLEELE…RIEELKMLFT (166 aa)) is the Helicase C-terminal domain.

It belongs to the SNF2/RAD54 helicase family. RAD16 subfamily.

It is found in the nucleus. Its function is as follows. Functions in error-free postreplication DNA repair or DNA-damage tolerance (DTT) pathway. Required for homologous recombination (HR) induced by DNA double-strand break (DSB) in somatic cells. Required for damage-induced DNA repair, independently of MUS81 and RECQL4A. Plays a role in synthesis-dependent strand annealing (SDSA) but not in single-strand annealing (SSA). Possesses double-stranded DNA-dependent ATPase activity. Is able to regress replication forks with preference for forks with a leading strand gap. Is able to catalyze branch migration of Holliday junctions and is unaffected by protein blockades. The polypeptide is DNA repair protein RAD5A (Arabidopsis thaliana (Mouse-ear cress)).